A 303-amino-acid polypeptide reads, in one-letter code: ATP synthase gamma chain (303 aa).

Belongs to the ATPase gamma chain family. In terms of assembly, F-type ATPases have 2 components, CF(1) - the catalytic core - and CF(0) - the membrane proton channel. CF(1) has five subunits: alpha(3), beta(3), gamma(1), delta(1), epsilon(1). CF(0) has three main subunits: a, b and c.

The protein localises to the cell inner membrane. Its function is as follows. Produces ATP from ADP in the presence of a proton gradient across the membrane. The gamma chain is believed to be important in regulating ATPase activity and the flow of protons through the CF(0) complex. The chain is ATP synthase gamma chain from Bartonella henselae (strain ATCC 49882 / DSM 28221 / CCUG 30454 / Houston 1) (Rochalimaea henselae).